The chain runs to 441 residues: Mitochondrial distribution and morphology protein 12 (441 aa).

One can recognise an SMP-LTD domain in the interval 1-441 (MSIDIDWERA…VYPSFWTFLV (441 aa)). Disordered stretches follow at residues 70–89 (YEDG…PMRE) and 180–289 (TPLR…RMRE). Composition is skewed to polar residues over residues 226–245 (SRPS…SVST) and 253–263 (SSQTVLANNPG).

Belongs to the MDM12 family. As to quaternary structure, component of the ER-mitochondria encounter structure (ERMES) or MDM complex, composed of MMM1, MDM10, MDM12 and MDM34. An MMM1 homodimer associates with one molecule of MDM12 on each side in a pairwise head-to-tail manner, and the SMP-LTD domains of MMM1 and MDM12 generate a continuous hydrophobic tunnel for phospholipid trafficking.

It localises to the mitochondrion outer membrane. It is found in the endoplasmic reticulum membrane. Component of the ERMES/MDM complex, which serves as a molecular tether to connect the endoplasmic reticulum (ER) and mitochondria. Components of this complex are involved in the control of mitochondrial shape and protein biogenesis, and function in nonvesicular lipid trafficking between the ER and mitochondria. MDM12 is required for the interaction of the ER-resident membrane protein MMM1 and the outer mitochondrial membrane-resident beta-barrel protein MDM10. The MDM12-MMM1 subcomplex functions in the major beta-barrel assembly pathway that is responsible for biogenesis of all mitochondrial outer membrane beta-barrel proteins, and acts in a late step after the SAM complex. The MDM10-MDM12-MMM1 subcomplex further acts in the TOM40-specific pathway after the action of the MDM12-MMM1 complex. Essential for establishing and maintaining the structure of mitochondria and maintenance of mtDNA nucleoids. In Paracoccidioides brasiliensis (strain Pb03), this protein is Mitochondrial distribution and morphology protein 12.